The chain runs to 447 residues: GTPase Der (447 aa).

EngA-type G domains are found at residues 3-167 and 181-354; these read PVIA…VQER and VKIA…AAAM. GTP contacts are provided by residues 9 to 16, 56 to 60, 119 to 122, 187 to 194, 234 to 238, and 299 to 302; these read GRPNVGKS, DTGGF, NKAE, DTAGL, and NKWD. Residues 355–439 enclose the KH-like domain; it reads VKLPTPQLTR…PLRIEFRTNK (85 aa).

The protein belongs to the TRAFAC class TrmE-Era-EngA-EngB-Septin-like GTPase superfamily. EngA (Der) GTPase family. Associates with the 50S ribosomal subunit.

GTPase that plays an essential role in the late steps of ribosome biogenesis. The sequence is that of GTPase Der from Cupriavidus taiwanensis (strain DSM 17343 / BCRC 17206 / CCUG 44338 / CIP 107171 / LMG 19424 / R1) (Ralstonia taiwanensis (strain LMG 19424)).